A 968-amino-acid chain; its full sequence is Isoleucine--tRNA ligase (968 aa).

The 'HIGH' region motif lies at 68–78 (PYANGALHMGH). E582 is an L-isoleucyl-5'-AMP binding site. A 'KMSKS' region motif is present at residues 623–627 (KMSKS). An ATP-binding site is contributed by K626. Zn(2+) is bound by residues C936, C939, C956, and C959.

The protein belongs to the class-I aminoacyl-tRNA synthetase family. IleS type 1 subfamily. Monomer. The cofactor is Zn(2+).

It is found in the cytoplasm. It carries out the reaction tRNA(Ile) + L-isoleucine + ATP = L-isoleucyl-tRNA(Ile) + AMP + diphosphate. Its function is as follows. Catalyzes the attachment of isoleucine to tRNA(Ile). As IleRS can inadvertently accommodate and process structurally similar amino acids such as valine, to avoid such errors it has two additional distinct tRNA(Ile)-dependent editing activities. One activity is designated as 'pretransfer' editing and involves the hydrolysis of activated Val-AMP. The other activity is designated 'posttransfer' editing and involves deacylation of mischarged Val-tRNA(Ile). This chain is Isoleucine--tRNA ligase, found in Prochlorococcus marinus (strain MIT 9312).